Here is an 897-residue protein sequence, read N- to C-terminus: Ubiquitin carboxyl-terminal hydrolase 33 (897 aa).

The UBP-type zinc finger occupies 7-110 (NDCPHLECVG…KQLPNAAKAV (104 aa)). 12 residues coordinate Zn(2+): Cys9, His11, Cys31, Cys34, Cys44, Cys49, Cys54, His61, His65, His71, Cys84, and Cys87. The USP domain occupies 156 to 670 (TGLKNIGNTC…EAYVLFYKKS (515 aa)). The active-site Nucleophile is Cys165. Disordered stretches follow at residues 261–308 (LIPE…GPRV) and 343–420 (GSHG…HKKV). Positions 287–297 (DDFQSCESCGS) are enriched in polar residues. Composition is skewed to basic and acidic residues over residues 299–308 (DRADNEGPRV) and 344–353 (SHGDLDKDVD). Residues 355–396 (TSDSRPIISSQGAIKAQGRTSDSEIQVSSTVRPQSPTGNEGI) show a composition bias toward polar residues. The segment covering 398–411 (SRLSSSPPKSSAWP) has biased composition (low complexity). Residue His628 is the Proton acceptor of the active site. DUSP domains lie at 672–765 (DETQ…LYVC) and 773–876 (EKLE…RPSV). Residues 875–884 (SVSHQESETS) are compositionally biased toward low complexity. Residues 875–897 (SVSHQESETSQSEEKIEVETRTV) are disordered. The span at 886–897 (SEEKIEVETRTV) shows a compositional bias: basic and acidic residues.

This sequence belongs to the peptidase C19 family. USP20/USP33 subfamily.

Its subcellular location is the cytoplasm. The protein localises to the perinuclear region. The protein resides in the cytoskeleton. It localises to the microtubule organizing center. It is found in the centrosome. It carries out the reaction Thiol-dependent hydrolysis of ester, thioester, amide, peptide and isopeptide bonds formed by the C-terminal Gly of ubiquitin (a 76-residue protein attached to proteins as an intracellular targeting signal).. Its function is as follows. Deubiquitinating enzyme involved in various processes such as centrosome duplication, cellular migration and beta-2 adrenergic receptor/ADRB2 recycling. Involved in regulation of centrosome duplication by mediating deubiquitination of ccp110 in S and G2/M phase, leading to stabilize ccp110 during the period which centrioles duplicate and elongate. Involved in cell migration via its interaction with intracellular domain of robo1, leading to regulate the Slit signaling. Plays a role in commissural axon guidance cross the ventral midline of the neural tube in a Slit-dependent manner, possibly by mediating the deubiquitination of robo1. Acts as a regulator of G-protein coupled receptor (GPCR) signaling by mediating the deubiquitination of beta-arrestins (arrb1 and arrb2) and beta-2 adrenergic receptor (adrb2). Deubiquitinates dio2, thereby regulating thyroid hormone regulation. Mediates deubiquitination of both 'Lys-48'- and 'Lys-63'-linked polyubiquitin chains. The sequence is that of Ubiquitin carboxyl-terminal hydrolase 33 (usp33) from Danio rerio (Zebrafish).